A 554-amino-acid polypeptide reads, in one-letter code: Arginine--tRNA ligase (554 aa).

The short motif at 132–142 (ANPTGPIHLGG) is the 'HIGH' region element.

It belongs to the class-I aminoacyl-tRNA synthetase family. As to quaternary structure, monomer.

The protein localises to the cytoplasm. It carries out the reaction tRNA(Arg) + L-arginine + ATP = L-arginyl-tRNA(Arg) + AMP + diphosphate. The polypeptide is Arginine--tRNA ligase (Clavibacter sepedonicus (Clavibacter michiganensis subsp. sepedonicus)).